The following is a 332-amino-acid chain: Fructose-1,6-bisphosphatase class 1 (332 aa).

Mg(2+) is bound by residues glutamate 89, aspartate 110, leucine 112, and aspartate 113. Substrate is bound by residues 113 to 116 (DGSS), asparagine 206, tyrosine 239, 257 to 259 (YLY), and lysine 269. A Mg(2+)-binding site is contributed by glutamate 275.

It belongs to the FBPase class 1 family. As to quaternary structure, homotetramer. Mg(2+) is required as a cofactor.

It is found in the cytoplasm. The catalysed reaction is beta-D-fructose 1,6-bisphosphate + H2O = beta-D-fructose 6-phosphate + phosphate. It functions in the pathway carbohydrate biosynthesis; gluconeogenesis. The polypeptide is Fructose-1,6-bisphosphatase class 1 (Salmonella gallinarum (strain 287/91 / NCTC 13346)).